A 409-amino-acid chain; its full sequence is Phosphatidylserine decarboxylase proenzyme, mitochondrial (409 aa).

A mitochondrion-targeting transit peptide spans 1–52 (MATSVGHRCLGLLHGVAPWRSSLHPCEITALSQSLQPLRKLPFRAFRTDARK). Residues 53-63 (IHTAPARTMFL) are Mitochondrial matrix-facing. Residues 64–82 (LRPVPILLATGGGYAGYRQ) form a helical membrane-spanning segment. At 83 to 409 (YEKYRERELE…IRFGEALGSL (327 aa)) the chain is on the mitochondrial intermembrane side. Residues aspartate 191, histidine 267, and serine 378 each act as charge relay system; for autoendoproteolytic cleavage activity in the active site. Serine 378 acts as the Schiff-base intermediate with substrate; via pyruvic acid; for decarboxylase activity in catalysis. A Pyruvic acid (Ser); by autocatalysis modification is found at serine 378.

This sequence belongs to the phosphatidylserine decarboxylase family. PSD-B subfamily. Eukaryotic type I sub-subfamily. As to quaternary structure, heterodimer of a large membrane-associated beta subunit and a small pyruvoyl-containing alpha subunit. Requires pyruvate as cofactor. In terms of processing, is synthesized initially as an inactive proenzyme. Formation of the active enzyme involves a self-maturation process in which the active site pyruvoyl group is generated from an internal serine residue via an autocatalytic post-translational modification. Two non-identical subunits are generated from the proenzyme in this reaction, and the pyruvate is formed at the N-terminus of the alpha chain, which is derived from the carboxyl end of the proenzyme. The autoendoproteolytic cleavage occurs by a canonical serine protease mechanism, in which the side chain hydroxyl group of the serine supplies its oxygen atom to form the C-terminus of the beta chain, while the remainder of the serine residue undergoes an oxidative deamination to produce ammonia and the pyruvoyl prosthetic group on the alpha chain. During this reaction, the Ser that is part of the protease active site of the proenzyme becomes the pyruvoyl prosthetic group, which constitutes an essential element of the active site of the mature decarboxylase.

The protein resides in the mitochondrion inner membrane. Its subcellular location is the lipid droplet. It localises to the cytoplasm. The catalysed reaction is a 1,2-diacyl-sn-glycero-3-phospho-L-serine + H(+) = a 1,2-diacyl-sn-glycero-3-phosphoethanolamine + CO2. It participates in phospholipid metabolism; phosphatidylethanolamine biosynthesis. Its function is as follows. Catalyzes the formation of phosphatidylethanolamine (PtdEtn) from phosphatidylserine (PtdSer). Plays a central role in phospholipid metabolism and in the interorganelle trafficking of phosphatidylserine. May be involved in lipid droplet biogenesis at the endoplasmic reticulum membrane. This is Phosphatidylserine decarboxylase proenzyme, mitochondrial from Pongo abelii (Sumatran orangutan).